The following is a 440-amino-acid chain: MEKLAVLYAEHIATLQQRTRTICEQEGLEGLVIHSGQAKRQFLDDMYYPFKVNPHFKAWLPVIDNPHCWIVVNGSDKPKLIFYRPIDFWHKVPDEPRDFWAEYFDIELLLQPDQVEKLLPYDKAKFAYIGEYLEVAQALGFSIMNPEPVLNYIHYHRAYKTQYELECLRNANRIAVDGHKAARDAFFNGGSEFDIQQAYLMATRQSENEMPYGNIVALNENCAILHYTHFEPKAPQTHNSFLIDAGANFNGYAADITRTYDFKKQGEFADLVNAMTAHQIELGKSLKPGLLYGDLHIDCHNRIAQLLSDFDIVKLPAAEIVERQITSTFFPHGLGHHLGAQVHDVGGFMRDETGAHQAPPEGHPFLRCTRLIEKNQVFTIEPGLYFIDSLLGDLAQTDNKQFINWEKVEAFKPFGGIRIEDNIIVHEDSLENMTRNLLLD.

Asp244, Asp255, His336, Glu381, and Glu420 together coordinate Mn(2+).

This sequence belongs to the peptidase M24B family. Mn(2+) is required as a cofactor. The N-terminus is blocked.

The catalysed reaction is Xaa-L-Pro dipeptide + H2O = an L-alpha-amino acid + L-proline. It carries out the reaction diisopropyl fluorophosphate + H2O = diisopropyl phosphate + fluoride + 2 H(+). In terms of biological role, splits dipeptides with a prolyl or hydroxyprolyl residue in the C-terminal position and a nonpolar amino acid at the N-terminal position. Also catalyzes the hydrolysis of toxic organophosphorus cholinesterase-inhibiting compounds including nerve gases such as diisopropylfluorophosphate (DFP), O-isopropyl methylphosphonofluoridate (sarin), O-pinacolyl methylphosphonofluoridate (soman), and O-cyclohexyl methylphosphonofluoridate. The sequence is that of Xaa-Pro dipeptidase (pepQ) from Pseudoalteromonas haloplanktis (Alteromonas haloplanktis).